Consider the following 249-residue polypeptide: Triosephosphate isomerase (249 aa).

A substrate-binding site is contributed by 9–11 (NWK). The active-site Electrophile is the His94. Glu166 functions as the Proton acceptor in the catalytic mechanism. Residues Gly172, Ser211, and 232 to 233 (GG) each bind substrate.

Belongs to the triosephosphate isomerase family. In terms of assembly, homodimer.

The protein localises to the cytoplasm. The catalysed reaction is D-glyceraldehyde 3-phosphate = dihydroxyacetone phosphate. The protein operates within carbohydrate biosynthesis; gluconeogenesis. It functions in the pathway carbohydrate degradation; glycolysis; D-glyceraldehyde 3-phosphate from glycerone phosphate: step 1/1. Functionally, involved in the gluconeogenesis. Catalyzes stereospecifically the conversion of dihydroxyacetone phosphate (DHAP) to D-glyceraldehyde-3-phosphate (G3P). The sequence is that of Triosephosphate isomerase from Moorella thermoacetica (strain ATCC 39073 / JCM 9320).